Reading from the N-terminus, the 146-residue chain is Leghemoglobin 2 (146 aa).

A Globin domain is found at 2 to 146 (GFTAQQDALV…LAAAIKKAMS (145 aa)). Tyrosine 30 is modified (nitrated tyrosine). Serine 45 contacts heme b. Position 45 is a phosphoserine (serine 45). Histidine 61 is a binding site for O2. Residues lysine 64, histidine 93, and lysine 96 each contribute to the heme b site. Position 134 is a nitrated tyrosine (tyrosine 134).

Belongs to the plant globin family. As to quaternary structure, monomer. In terms of processing, nitrated in effective nodules and particularly in hypoxic conditions; this mechanism may play a protective role in the symbiosis by buffering toxic peroxynitrite NO(2)(-). Nitration level decrease during nodule senescence. Phosphorylation at Ser-45 disrupts the molecular environment of its porphyrin ring oxygen binding pocket, thus leading to a reduced oxygen consumption and to the delivery of oxygen O(2) to symbiosomes. Specifically and strongly expressed in root nodules and at low levels in seedlings.

It is found in the cytoplasm. The protein resides in the cytosol. It localises to the nucleus. Leghemoglobin that reversibly binds oxygen O(2) through a pentacoordinated heme iron. In root nodules, facilitates the diffusion of oxygen to the bacteroids while preventing the bacterial nitrogenase from being inactivated by buffering dioxygen, nitric oxide and carbon monoxide, and promoting the formation of reactive oxygen species (ROS, e.g. H(2)O(2)). This role is essential for symbiotic nitrogen fixation (SNF). This chain is Leghemoglobin 2, found in Lotus japonicus (Lotus corniculatus var. japonicus).